Here is a 490-residue protein sequence, read N- to C-terminus: GTPase Der (490 aa).

EngA-type G domains follow at residues 3 to 166 (PVVA…AEAM) and 200 to 373 (IKLA…DSAT). GTP-binding positions include 9–16 (GRPNVGKS), 56–60 (DTGGI), 118–121 (NKVD), 206–213 (GKPNVGKS), 253–257 (DTAGV), and 318–321 (NKWD). The KH-like domain occupies 374 to 458 (RRVSTSMLTR…PIQIRFQDGG (85 aa)).

Belongs to the TRAFAC class TrmE-Era-EngA-EngB-Septin-like GTPase superfamily. EngA (Der) GTPase family. Associates with the 50S ribosomal subunit.

In terms of biological role, GTPase that plays an essential role in the late steps of ribosome biogenesis. The protein is GTPase Der of Shewanella piezotolerans (strain WP3 / JCM 13877).